The sequence spans 613 residues: Cilia- and flagella-associated protein 100 (613 aa).

A disordered region spans residues 36 to 55; that stretch reads KSKESKKNKGNVTISDRSSN. Residues 45-55 are compositionally biased toward polar residues; that stretch reads GNVTISDRSSN. Coiled-coil stretches lie at residues 167-198, 233-260, 396-435, and 504-580; these read ALAM…FLEK, VEIR…KHYK, FTKL…DKEV, and GTVQ…RGRK.

Belongs to the CFAP100 family.

The protein localises to the cytoplasm. The protein resides in the cytoskeleton. It is found in the cilium axoneme. Its function is as follows. May play a role in ciliary/flagellar motility by regulating the assembly and the activity of axonemal inner dynein arm. The sequence is that of Cilia- and flagella-associated protein 100 from Mus musculus (Mouse).